We begin with the raw amino-acid sequence, 258 residues long: Imidazole glycerol phosphate synthase subunit HisF (258 aa).

Catalysis depends on residues aspartate 12 and aspartate 131.

The protein belongs to the HisA/HisF family. As to quaternary structure, heterodimer of HisH and HisF.

The protein resides in the cytoplasm. The enzyme catalyses 5-[(5-phospho-1-deoxy-D-ribulos-1-ylimino)methylamino]-1-(5-phospho-beta-D-ribosyl)imidazole-4-carboxamide + L-glutamine = D-erythro-1-(imidazol-4-yl)glycerol 3-phosphate + 5-amino-1-(5-phospho-beta-D-ribosyl)imidazole-4-carboxamide + L-glutamate + H(+). It participates in amino-acid biosynthesis; L-histidine biosynthesis; L-histidine from 5-phospho-alpha-D-ribose 1-diphosphate: step 5/9. In terms of biological role, IGPS catalyzes the conversion of PRFAR and glutamine to IGP, AICAR and glutamate. The HisF subunit catalyzes the cyclization activity that produces IGP and AICAR from PRFAR using the ammonia provided by the HisH subunit. This is Imidazole glycerol phosphate synthase subunit HisF from Sinorhizobium fredii (strain NBRC 101917 / NGR234).